Reading from the N-terminus, the 37-residue chain is Large ribosomal subunit protein bL36 (37 aa).

Belongs to the bacterial ribosomal protein bL36 family.

This Variovorax paradoxus (strain S110) protein is Large ribosomal subunit protein bL36.